The chain runs to 1254 residues: MFPFQPMYPMQPMPYRNPFAAPRRPWFPRTDPFLAMQVQELTRSMANLTFKQRRDAPPEGPSAKKPKKEASQKQKGGGQGKKKKNQGKKKAKTGPPNPKAQNGNKKKTNKKPGKRQRMVMKLESDKTFPIMLEGKINGYACVVGGKLFRPMHVEGKIDNDVLAALKTKKASKYDLEYADVPQNMRADTFKYTHEKPQGYYSWHHGAVQYENGRFTVPKGVGAKGDSGRPILDNQGRVVAIVLGGVNEGSRTALSVVMWNEKGVTVKYTPENCEQWSLVTTMCLLANVTFPCAQPPICYDRKPAETLAMLSVNVDNPGYDELLEAAVKCPGRKRRSTEELFKEYKLTRPYMARCIRCAVGSCHSPIAIEAVKSDGHDGYVRLQTSSQYGLDSSGNLKGRTMRYDMHGTIKEIPLHQVSLHTSRPCHIVDGHGYFLLARCPAGDSITMEFKKDSVTHSCSVPYEVKFNPVGRELYTHPPEHGVEQACQVYAHDAQNRGAYVEMHLPGSEVDSSLVSLSGSSVTVTPPVGTSALVECECGGTKISETINKTKQFSQCTKKEQCRAYRLQNDKWVYNSDKLPKAAGATLKGKLHVPFLLADGKCTVPLAPEPMITFGFRSVSLKLHPKNPTYLTTRQLADEPHYTHELISEPAVRNFTVTEKGWEFVWGNHPPKRFWAQETAPGNPHGLPHEVITHYYHRYPMSTILGLSICAAIATVSVAASTWLFCRSRVACLTPYRLTPNARIPFCLAVLCCARTARAETTWESLDHLWNNNQQMFWIQLLIPLAALIVVTRLLRCVCCVVPFLVMAGAAAGAYEHATTMPSQAGISYNTIVNRAGYAPLPISITPTKIKLIPTVNLEYVTCHYKTGMDSPAIKCCGSQECTPTYRPDEQCKVFTGVYPFMWGGAYCFCDTENTQVSKAYVMKSDDCLADHAEAYKAHTASVQAFLNITVGEHSIVTTVYVNGETPVNFNGVKLTAGPLSTAWTPFDRKIVQYAGEIYNYDFPEYGAGQPGAFGDIQSRTVSSSDLYANTNLVLQRPKAGAIHVPYTQAPSGFEQWKKDKAPSLKFTAPFGCEIYTNPIRAENCAVGSIPLAFDIPDALFTRVSETPTLSAAECTLNECVYSSDFGGIATVKYSASKSGKCAVHVPSGTATLKEAAVELTEQGSATIHFSTANIHPEFRLQICTSYVTCKGDCHPPKDHIVTHPQYHAQTFTAAVSKTAWTWLTSLLGGSAVIIIIGLVLATIVAMYVLTNQKHN.

The interval 1–33 (MFPFQPMYPMQPMPYRNPFAAPRRPWFPRTDPF) is necessary for nucleocapsid assembly and virus assembly. The interval 33–68 (FLAMQVQELTRSMANLTFKQRRDAPPEGPSAKKPKK) is host transcription inhibition. A Supraphysiological nuclear export signal motif is present at residues 41–48 (LTRSMANL). Residues 45–119 (MANLTFKQRR…KKPGKRQRMV (75 aa)) form a disordered region. A Nuclear localization signal motif is present at residues 64–68 (KKPKK). Residues 80–92 (GKKKKNQGKKKAK) are compositionally biased toward basic residues. The segment at 91–127 (AKTGPPNPKAQNGNKKKTNKKPGKRQRMVMKLESDKT) is binding to the viral RNA. A phosphothreonine mark is found at T93 and T108. Positions 104 to 118 (NKKKTNKKPGKRQRM) are enriched in basic residues. The interval 112–126 (PGKRQRMVMKLESDK) is ribosome-binding. The residue at position 124 (S124) is a Phosphoserine. Residues 126 to 275 (KTFPIMLEGK…KYTPENCEQW (150 aa)) form the Peptidase S3 domain. Residue T127 is modified to Phosphothreonine. Catalysis depends on charge relay system residues H152, D174, and S226. A functions as an uncleaved signal peptide for the precursor of protein E3/E2 region spans residues 276–287 (SLVTTMCLLANV). The Extracellular portion of the chain corresponds to 276–701 (SLVTTMCLLA…HYYHRYPMST (426 aa)). N286, N546, and N652 each carry an N-linked (GlcNAc...) asparagine; by host glycan. The helical transmembrane segment at 702–722 (ILGLSICAAIATVSVAASTWL) threads the bilayer. Residues 723-757 (FCRSRVACLTPYRLTPNARIPFCLAVLCCARTARA) are Cytoplasmic-facing. S-palmitoyl cysteine; by host attachment occurs at residues C730, C750, and C751. Residues 730–750 (CLTPYRLTPNARIPFCLAVLC) are transient transmembrane before p62-6K protein processing. At 758 to 772 (ETTWESLDHLWNNNQ) the chain is on the extracellular side. The chain crosses the membrane as a helical span at residues 773–793 (QMFWIQLLIPLAALIVVTRLL). Residues 794-795 (RC) lie on the Cytoplasmic side of the membrane. A helical membrane pass occupies residues 796–816 (VCCVVPFLVMAGAAAGAYEHA). The Extracellular segment spans residues 817–1224 (TTMPSQAGIS…SKTAWTWLTS (408 aa)). 4 disulfide bridges follow: C861–C926, C874–C906, C875–C908, and C880–C890. The segment at 896 to 913 (VYPFMWGGAYCFCDTENT) is E1 fusion peptide loop. A glycan (N-linked (GlcNAc...) asparagine; by host) is linked at N946. 4 disulfides stabilise this stretch: C1071-C1083, C1113-C1188, C1118-C1192, and C1140-C1182. The chain crosses the membrane as a helical span at residues 1225-1245 (LLGGSAVIIIIGLVLATIVAM). The Cytoplasmic portion of the chain corresponds to 1246–1254 (YVLTNQKHN).

Homodimer. Homomultimer. Interacts with host karyopherin KPNA4; this interaction allows the nuclear import of the viral capsid protein. Interacts with spike glycoprotein E2. Interacts with host IRAK1; the interaction leads to inhibition of IRAK1-dependent signaling. Part of a tetrameric complex composed of host CRM1, host importin alpha/beta dimer and the viral capsid; this complex blocks the receptor-mediated transport through the nuclear pore. Interacts with host phosphatase PPP1CA; this interaction dephosphorylates the capsid protein, which increases its ability to bind to the viral genome. As to quaternary structure, the precursor of protein E3/E2 and E1 form a heterodimer shortly after synthesis. In terms of assembly, interacts with spike glycoprotein E2. The precursor of protein E3/E2 and E1 form a heterodimer shortly after synthesis. Processing of the precursor of protein E3/E2 into E2 and E3 results in a heterodimer of the spike glycoproteins E2 and E1. Spike at virion surface are constituted of three E2-E1 heterodimers. After target cell attachment and endocytosis, E1 change conformation to form homotrimers. Interacts with 6K protein. Interacts with host LDLRAD3; this interaction mediates viral entry to the host cell. Interacts with spike glycoprotein E1. Processing of the precursor of protein E3/E2 into E2 and E3 results in a heterodimer of the spike glycoproteins E2 and E1. Spike at virion surface are constituted of a trimer of E2-E1 heterodimers. Interacts with 6K protein. Interacts with host LDLRAD3; this interaction mediates viral entry to the host cell. As to quaternary structure, oligomer. Interacts with spike glycoprotein E1. Interacts with spike glycoprotein E2. Structural polyprotein: Specific enzymatic cleavages in vivo yield mature proteins. Capsid protein is auto-cleaved during polyprotein translation, unmasking a signal peptide at the N-terminus of the precursor of E3/E2. The remaining polyprotein is then targeted to the host endoplasmic reticulum, where host signal peptidase cleaves it into pE2, 6K and E1 proteins. pE2 is further processed to mature E3 and E2 by host furin in trans-Golgi vesicle. Post-translationally, palmitoylated via thioester bonds. These palmitoylations may induce disruption of the C-terminus transmembrane. This would result in the reorientation of E2 C-terminus from lumenal to cytoplasmic side. In terms of processing, phosphorylated on serine and threonine residues. N-glycosylated. Post-translationally, palmitoylated via thioester bonds.

Its subcellular location is the virion. It is found in the host cytoplasm. The protein localises to the host cell membrane. The protein resides in the host nucleus. It localises to the virion membrane. It carries out the reaction Autocatalytic release of the core protein from the N-terminus of the togavirus structural polyprotein by hydrolysis of a -Trp-|-Ser- bond.. Its function is as follows. Forms an icosahedral capsid with a T=4 symmetry composed of 240 copies of the capsid protein surrounded by a lipid membrane through which penetrate 80 spikes composed of trimers of E1-E2 heterodimers. The capsid protein binds to the viral RNA genome at a site adjacent to a ribosome binding site for viral genome translation following genome release. Possesses a protease activity that results in its autocatalytic cleavage from the nascent structural protein. Following its self-cleavage, the capsid protein transiently associates with ribosomes, and within several minutes the protein binds to viral RNA and rapidly assembles into icosahedric core particles. The resulting nucleocapsid eventually associates with the cytoplasmic domain of the spike glycoprotein E2 at the cell membrane, leading to budding and formation of mature virions. In case of infection, new virions attach to target cells and after clathrin-mediated endocytosis their membrane fuses with the host endosomal membrane. This leads to the release of the nucleocapsid into the cytoplasm, followed by an uncoating event necessary for the genomic RNA to become accessible. The uncoating might be triggered by the interaction of capsid proteins with ribosomes. Binding of ribosomes would release the genomic RNA since the same region is genomic RNA-binding and ribosome-binding. Specifically inhibits interleukin-1 receptor-associated kinase 1/IRAK1-dependent signaling during viral entry, representing a means by which the alphaviruses may evade innate immune detection and activation prior to viral gene expression. Inhibits host transcription. Forms a tetrameric complex with XPO1/CRM1 and the nuclear import receptor importin. This complex blocks the central channel of host nuclear pores thereby inhibiting the receptor-mediated nuclear transport and thus the host mRNA and rRNA transcription. The inhibition of transcription is linked to a cytopathic effect on the host cell. In terms of biological role, provides the signal sequence for the translocation of the precursor of protein E3/E2 to the host endoplasmic reticulum. Furin-cleaved E3 remains associated with spike glycoprotein E1 and mediates pH protection of the latter during the transport via the secretory pathway. After virion release from the host cell, the assembly protein E3 is gradually released in the extracellular space. Plays a role in viral attachment to target host cell, by binding to the cell receptor LDLRAD3. Synthesized as a p62 precursor which is processed by furin at the cell membrane just before virion budding, giving rise to E2-E1 heterodimer. The p62-E1 heterodimer is stable, whereas E2-E1 is unstable and dissociate at low pH. p62 is processed at the last step, presumably to avoid E1 fusion activation before its final export to cell surface. E2 C-terminus contains a transitory transmembrane that would be disrupted by palmitoylation, resulting in reorientation of the C-terminal tail from lumenal to cytoplasmic side. This step is critical since E2 C-terminus is involved in budding by interacting with capsid proteins. This release of E2 C-terminus in cytoplasm occurs lately in protein export, and precludes premature assembly of particles at the endoplasmic reticulum membrane. Functionally, acts as a viroporin that participates in virus glycoprotein processing and transport to the plasma membrane, cell permeabilization and budding of viral particles. Disrupts the calcium homeostasis of the cell, probably at the endoplasmic reticulum level. This leads to cytoplasmic calcium elevation. Because of its lipophilic properties, the 6K protein is postulated to influence the selection of lipids that interact with the transmembrane domains of the glycoproteins, which, in turn, affects the deformability of the bilayer required for the extreme curvature that occurs as budding proceeds. Present in low amount in virions, about 3% compared to viral glycoproteins. Its function is as follows. Class II viral fusion protein. Fusion activity is inactive as long as E1 is bound to E2 in mature virion. After virus attachment to cell receptor LDLRAD3 and endocytosis, acidification of the endosome would induce dissociation of E1/E2 heterodimer and concomitant trimerization of the E1 subunits. This E1 trimer is fusion active, and promotes release of viral nucleocapsid in cytoplasm after endosome and viral membrane fusion. Efficient fusion requires the presence of cholesterol and sphingolipid in the target membrane. Fusion is optimal at levels of about 1 molecule of cholesterol per 2 molecules of phospholipids, and is specific for sterols containing a 3-beta-hydroxyl group. This is Structural polyprotein from Bos taurus (Bovine).